A 274-amino-acid chain; its full sequence is Thiazole synthase (274 aa).

Residue lysine 111 is the Schiff-base intermediate with DXP of the active site. 1-deoxy-D-xylulose 5-phosphate is bound by residues glycine 172, 198–199 (AG), and 220–221 (NT).

Belongs to the ThiG family. In terms of assembly, homotetramer. Forms heterodimers with either ThiH or ThiS.

It is found in the cytoplasm. The enzyme catalyses [ThiS sulfur-carrier protein]-C-terminal-Gly-aminoethanethioate + 2-iminoacetate + 1-deoxy-D-xylulose 5-phosphate = [ThiS sulfur-carrier protein]-C-terminal Gly-Gly + 2-[(2R,5Z)-2-carboxy-4-methylthiazol-5(2H)-ylidene]ethyl phosphate + 2 H2O + H(+). Its pathway is cofactor biosynthesis; thiamine diphosphate biosynthesis. Catalyzes the rearrangement of 1-deoxy-D-xylulose 5-phosphate (DXP) to produce the thiazole phosphate moiety of thiamine. Sulfur is provided by the thiocarboxylate moiety of the carrier protein ThiS. In vitro, sulfur can be provided by H(2)S. This is Thiazole synthase from Gloeobacter violaceus (strain ATCC 29082 / PCC 7421).